Here is a 1429-residue protein sequence, read N- to C-terminus: DNA-directed RNA polymerase subunit beta' (1429 aa).

Cysteine 68, cysteine 70, cysteine 83, and cysteine 86 together coordinate Zn(2+). Positions 459, 461, and 463 each coordinate Mg(2+). Cysteine 805, cysteine 879, cysteine 886, and cysteine 889 together coordinate Zn(2+). The tract at residues glutamate 1407 to glutamate 1429 is disordered. A compositionally biased stretch (polar residues) spans alanine 1419–glutamate 1429.

This sequence belongs to the RNA polymerase beta' chain family. The RNAP catalytic core consists of 2 alpha, 1 beta, 1 beta' and 1 omega subunit. When a sigma factor is associated with the core the holoenzyme is formed, which can initiate transcription. The cofactor is Mg(2+). It depends on Zn(2+) as a cofactor.

It carries out the reaction RNA(n) + a ribonucleoside 5'-triphosphate = RNA(n+1) + diphosphate. Its function is as follows. DNA-dependent RNA polymerase catalyzes the transcription of DNA into RNA using the four ribonucleoside triphosphates as substrates. This is DNA-directed RNA polymerase subunit beta' from Rhodopirellula baltica (strain DSM 10527 / NCIMB 13988 / SH1).